The following is a 230-amino-acid chain: Sugar fermentation stimulation protein homolog (230 aa).

The protein belongs to the SfsA family.

This is Sugar fermentation stimulation protein homolog from Clostridium botulinum (strain Alaska E43 / Type E3).